Consider the following 136-residue polypeptide: MARKIFKYKGYTLEELQDMSLEEVMELFPARQRRSLKRGFLPRQQIVLDKMRKLNKEGSKDGRPVVIRTHCRDMIVLPEMVGTTFGIYNGQNFVEVTIEPEMIGCYFGEFAPTRQKVQHGDPGMGATRSSMFVPLK.

Residues 117-136 (VQHGDPGMGATRSSMFVPLK) form a disordered region.

It belongs to the universal ribosomal protein uS19 family.

Protein S19 forms a complex with S13 that binds strongly to the 16S ribosomal RNA. This Methanobrevibacter smithii (strain ATCC 35061 / DSM 861 / OCM 144 / PS) protein is Small ribosomal subunit protein uS19.